Reading from the N-terminus, the 295-residue chain is Protein transport protein SSO2 (295 aa).

Positions 1-18 (MSNPYQNSQNGYQQNNSY) are enriched in low complexity. A disordered region spans residues 1–31 (MSNPYQNSQNGYQQNNSYELNNYPNKQYSSS). Over 1–270 (MSNPYQNSQN…SAKSARKKKL (270 aa)) the chain is Cytoplasmic. A compositionally biased stretch (polar residues) spans 19 to 31 (ELNNYPNKQYSSS). Positions 33-110 (EDDFVQFMNE…NRIKNVQTQA (78 aa)) form a coiled coil. One can recognise a t-SNARE coiled-coil homology domain in the interval 196–258 (LNEVQVRHRE…EQGVGHTNKA (63 aa)). A helical; Anchor for type IV membrane protein transmembrane segment spans residues 271–291 (WCFFICLLIVIILAVILGAYF). The Extracellular portion of the chain corresponds to 292-295 (GTRK).

This sequence belongs to the syntaxin family.

The protein localises to the membrane. Late secretory t-SNARE protein required for secretion and proper cytokinesis. Plays an important role in the secretion of virulence-associated extracellular enzymes and vesicle-mediated polarized hyphal growth. The chain is Protein transport protein SSO2 (SSO2) from Candida albicans (strain SC5314 / ATCC MYA-2876) (Yeast).